A 430-amino-acid chain; its full sequence is Tol-Pal system protein TolB (430 aa).

A signal peptide spans 1–21; sequence MKQALRVAFGFLMLWAAMLHA.

The protein belongs to the TolB family. In terms of assembly, the Tol-Pal system is composed of five core proteins: the inner membrane proteins TolA, TolQ and TolR, the periplasmic protein TolB and the outer membrane protein Pal. They form a network linking the inner and outer membranes and the peptidoglycan layer.

The protein resides in the periplasm. In terms of biological role, part of the Tol-Pal system, which plays a role in outer membrane invagination during cell division and is important for maintaining outer membrane integrity. TolB occupies a key intermediary position in the Tol-Pal system because it communicates directly with both membrane-embedded components, Pal in the outer membrane and TolA in the inner membrane. In Escherichia fergusonii (strain ATCC 35469 / DSM 13698 / CCUG 18766 / IAM 14443 / JCM 21226 / LMG 7866 / NBRC 102419 / NCTC 12128 / CDC 0568-73), this protein is Tol-Pal system protein TolB.